The following is a 401-amino-acid chain: Acetate kinase (401 aa).

Residue Asn-9 coordinates Mg(2+). Lys-16 serves as a coordination point for ATP. A substrate-binding site is contributed by Arg-88. Catalysis depends on Asp-147, which acts as the Proton donor/acceptor. ATP contacts are provided by residues 207–211 (HLGNG), 282–284 (DCR), and 333–337 (GIGEN). Glu-388 is a Mg(2+) binding site.

This sequence belongs to the acetokinase family. Homodimer. The cofactor is Mg(2+). It depends on Mn(2+) as a cofactor.

The protein localises to the cytoplasm. It catalyses the reaction acetate + ATP = acetyl phosphate + ADP. The protein operates within metabolic intermediate biosynthesis; acetyl-CoA biosynthesis; acetyl-CoA from acetate: step 1/2. Functionally, catalyzes the formation of acetyl phosphate from acetate and ATP. Can also catalyze the reverse reaction. The chain is Acetate kinase from Haemophilus influenzae (strain 86-028NP).